We begin with the raw amino-acid sequence, 205 residues long: Protein N-terminal glutamine amidohydrolase (205 aa).

Active-site residues include cysteine 28, histidine 81, and aspartate 97.

Belongs to the NTAQ1 family. Monomer.

The protein localises to the cytoplasm. It localises to the cytosol. The protein resides in the nucleus. The enzyme catalyses N-terminal L-glutaminyl-[protein] + H2O = N-terminal L-glutamyl-[protein] + NH4(+). In terms of biological role, mediates the side-chain deamidation of N-terminal glutamine residues to glutamate, an important step in N-end rule pathway of protein degradation. Conversion of the resulting N-terminal glutamine to glutamate renders the protein susceptible to arginylation, polyubiquitination and degradation as specified by the N-end rule. Does not act on substrates with internal or C-terminal glutamine and does not act on non-glutamine residues in any position. Does not deaminate acetylated N-terminal glutamine. With the exception of proline, all tested second-position residues on substrate peptides do not greatly influence the activity. In contrast, a proline at position 2, virtually abolishes deamidation of N-terminal glutamine. In Homo sapiens (Human), this protein is Protein N-terminal glutamine amidohydrolase.